The primary structure comprises 477 residues: Glycogen synthase (477 aa).

Lysine 15 contacts ADP-alpha-D-glucose.

It belongs to the glycosyltransferase 1 family. Bacterial/plant glycogen synthase subfamily.

It carries out the reaction [(1-&gt;4)-alpha-D-glucosyl](n) + ADP-alpha-D-glucose = [(1-&gt;4)-alpha-D-glucosyl](n+1) + ADP + H(+). It participates in glycan biosynthesis; glycogen biosynthesis. Functionally, synthesizes alpha-1,4-glucan chains using ADP-glucose. This chain is Glycogen synthase, found in Serratia proteamaculans (strain 568).